We begin with the raw amino-acid sequence, 536 residues long: Feruloyl esterase B (536 aa).

An N-terminal signal peptide occupies residues 1-20; the sequence is MKTSIVLSIVALFLTSKASA. Residues 21 to 59 form the CBM10 domain; the sequence is DCWSERLGWPCCSDSNAEVIYVDDDGDWGVENNDWCGIQ. A cellulose-binding region spans residues 22 to 59; sequence CWSERLGWPCCSDSNAEVIYVDDDGDWGVENNDWCGIQ. Residue asparagine 65 is glycosylated (N-linked (GlcNAc...) asparagine). 12 consecutive repeat copies span residues 78–90, 91–103, 104–116, 117–129, 134–146, 151–163, 164–176, 181–193, 194–206, 211–223, 224–236, and 237–249. Positions 78 to 249 are 12 X 13 AA repeats of N-Q-G-G-G-M-[PQ]-W-G-D-F-G-G; sequence NQGGGMPWGD…GGMQWGDFGG (172 aa). Residues 203 to 252 show a composition bias toward gly residues; the sequence is DFGGNQGGNQGGGMPWGDFGGNQGGGMQWGDFGGNQGGGMQWGDFGGNQG. The disordered stretch occupies residues 203–273; sequence DFGGNQGGNQ…SGPTVEYSTD (71 aa). The tract at residues 257–536 is catalytic; it reads WGNQGGNSGP…WDFVKQFSLP (280 aa).

Component of the multienzyme cellulase-hemicellulase complex.

It is found in the secreted. The catalysed reaction is feruloyl-polysaccharide + H2O = ferulate + polysaccharide.. Inhibited by the specific serine esterase inhibitor AEBSF. Functionally, involved in degradation of plant cell walls. Hydrolyzes of the feruloyl-arabinose ester bond in arabinoxylans as well as the feruloyl-galactose and feruloyl-arabinose ester bonds in pectin. The protein is Feruloyl esterase B (ESTA) of Piromyces equi.